A 201-amino-acid polypeptide reads, in one-letter code: Small ribosomal subunit protein uS5 (201 aa).

The tract at residues 1 to 28 (MARGEQQRGEGGQRRDRRDRNAPEERVD) is disordered. The S5 DRBM domain maps to 31–94 (IVEKLVHINR…EEAKKTMIRV (64 aa)). The segment at 173–201 (QIAAKRGKKVGDILGRRADGASAPEAIEG) is disordered. Basic and acidic residues predominate over residues 181–191 (KVGDILGRRAD).

It belongs to the universal ribosomal protein uS5 family. As to quaternary structure, part of the 30S ribosomal subunit. Contacts proteins S4 and S8.

Functionally, with S4 and S12 plays an important role in translational accuracy. In terms of biological role, located at the back of the 30S subunit body where it stabilizes the conformation of the head with respect to the body. The protein is Small ribosomal subunit protein uS5 of Caulobacter vibrioides (strain ATCC 19089 / CIP 103742 / CB 15) (Caulobacter crescentus).